Here is a 217-residue protein sequence, read N- to C-terminus: Small ribosomal subunit protein uS3c (217 aa).

Positions 39 to 109 (IRNFLRTKLI…RFRITITYIP (71 aa)) constitute a KH type-2 domain.

It belongs to the universal ribosomal protein uS3 family. As to quaternary structure, part of the 30S ribosomal subunit.

It localises to the plastid. The protein localises to the chloroplast. The chain is Small ribosomal subunit protein uS3c (rps3) from Chlorokybus atmophyticus (Soil alga).